An 852-amino-acid polypeptide reads, in one-letter code: Gamma-tubulin complex component 2 homolog (852 aa).

Ser-73 is subject to Phosphoserine.

The protein belongs to the TUBGCP family. As to quaternary structure, gamma-tubulin small complex (Gamma TuSC) is a heterotetrameric complex which contains two molecules of gamma-tubulin, and one molecule each of Dgrip84 and Dgrip91. The gamma-tubulin in this complex binds preferentially to GDP over GTP.

The protein localises to the cytoplasm. The protein resides in the cytoskeleton. It is found in the microtubule organizing center. It localises to the centrosome. Its subcellular location is the perinuclear region. The polypeptide is Gamma-tubulin complex component 2 homolog (Grip84) (Drosophila melanogaster (Fruit fly)).